Reading from the N-terminus, the 429-residue chain is Adenylosuccinate synthetase (429 aa).

GTP is bound by residues 12-18 (GDEGKGK) and 40-42 (GHT). Residue Asp-13 is the Proton acceptor of the active site. 2 residues coordinate Mg(2+): Asp-13 and Gly-40. Residues 13-16 (DEGK), 38-41 (NAGH), Thr-129, Arg-143, Gln-224, Thr-239, and Arg-303 each bind IMP. His-41 serves as the catalytic Proton donor. 299–305 (VTTGRAR) is a substrate binding site. Residues Arg-305, 331–333 (KLD), and 413–415 (GVG) contribute to the GTP site.

Belongs to the adenylosuccinate synthetase family. Homodimer. It depends on Mg(2+) as a cofactor.

It is found in the cytoplasm. The enzyme catalyses IMP + L-aspartate + GTP = N(6)-(1,2-dicarboxyethyl)-AMP + GDP + phosphate + 2 H(+). The protein operates within purine metabolism; AMP biosynthesis via de novo pathway; AMP from IMP: step 1/2. Plays an important role in the de novo pathway of purine nucleotide biosynthesis. Catalyzes the first committed step in the biosynthesis of AMP from IMP. The sequence is that of Adenylosuccinate synthetase from Rhodococcus erythropolis (strain PR4 / NBRC 100887).